We begin with the raw amino-acid sequence, 255 residues long: MWIGIISLFPEMFKAITDFGVTGRAVKQNLLQVQCWNPRDFTHDKHKTVDDRPYGGGPGMLMMVQPLRDAIREAKATACKEDGVEAKVIYLSPQGRKLDQAGVQTLATNQKLILVCGRYEGIDERLIQTEIDEEWSIGDYVLTGGELPAMTLIDAVARFIPGVLGKQTSALEDSFAEGLLDCPHYTRPEVLDGLPVPQVLMSGHHEQIRKWRLEQSLKRTWLRRPELLDSLALTDEQRVLLNNIKKRHKSVNSRT.

Residues G117 and 137 to 142 (IGDYVL) each bind S-adenosyl-L-methionine.

This sequence belongs to the RNA methyltransferase TrmD family. Homodimer.

Its subcellular location is the cytoplasm. The catalysed reaction is guanosine(37) in tRNA + S-adenosyl-L-methionine = N(1)-methylguanosine(37) in tRNA + S-adenosyl-L-homocysteine + H(+). Specifically methylates guanosine-37 in various tRNAs. The protein is tRNA (guanine-N(1)-)-methyltransferase of Glaesserella parasuis serovar 5 (strain SH0165) (Haemophilus parasuis).